Here is a 391-residue protein sequence, read N- to C-terminus: Lipid-A-disaccharide synthase (391 aa).

The protein belongs to the LpxB family.

The catalysed reaction is a lipid X + a UDP-2-N,3-O-bis[(3R)-3-hydroxyacyl]-alpha-D-glucosamine = a lipid A disaccharide + UDP + H(+). It functions in the pathway bacterial outer membrane biogenesis; LPS lipid A biosynthesis. In terms of biological role, condensation of UDP-2,3-diacylglucosamine and 2,3-diacylglucosamine-1-phosphate to form lipid A disaccharide, a precursor of lipid A, a phosphorylated glycolipid that anchors the lipopolysaccharide to the outer membrane of the cell. The polypeptide is Lipid-A-disaccharide synthase (Rickettsia akari (strain Hartford)).